Reading from the N-terminus, the 261-residue chain is Thiamine thiazole synthase (261 aa).

NAD(+) contacts are provided by residues alanine 33, glutamate 52–arginine 53, glycine 60, valine 124, and histidine 152–aspartate 154. Aspartate 154 and histidine 169 together coordinate Fe cation. NAD(+) is bound at residue isoleucine 219. Arginine 229 serves as a coordination point for glycine.

This sequence belongs to the THI4 family. As to quaternary structure, homooctamer; tetramer of dimers. Requires Fe(2+) as cofactor.

The enzyme catalyses hydrogen sulfide + glycine + NAD(+) = ADP-5-ethyl-4-methylthiazole-2-carboxylate + nicotinamide + 3 H2O + H(+). It functions in the pathway cofactor biosynthesis; thiamine diphosphate biosynthesis. Involved in the biosynthesis of the thiazole moiety of thiamine. Catalyzes the conversion of NAD and glycine to adenosine diphosphate 5-(2-hydroxyethyl)-4-methylthiazole-2-carboxylate (ADT), an adenylated thiazole intermediate, using free sulfide as a source of sulfur. This chain is Thiamine thiazole synthase, found in Pyrobaculum calidifontis (strain DSM 21063 / JCM 11548 / VA1).